The following is a 484-amino-acid chain: Glycogen synthase (484 aa).

An ADP-alpha-D-glucose-binding site is contributed by Lys-15.

Belongs to the glycosyltransferase 1 family. Bacterial/plant glycogen synthase subfamily.

The catalysed reaction is [(1-&gt;4)-alpha-D-glucosyl](n) + ADP-alpha-D-glucose = [(1-&gt;4)-alpha-D-glucosyl](n+1) + ADP + H(+). Its pathway is glycan biosynthesis; glycogen biosynthesis. Its function is as follows. Synthesizes alpha-1,4-glucan chains using ADP-glucose. The chain is Glycogen synthase from Bacillus licheniformis (strain ATCC 14580 / DSM 13 / JCM 2505 / CCUG 7422 / NBRC 12200 / NCIMB 9375 / NCTC 10341 / NRRL NRS-1264 / Gibson 46).